The chain runs to 420 residues: Gamma-glutamyl phosphate reductase (420 aa).

Belongs to the gamma-glutamyl phosphate reductase family.

Its subcellular location is the cytoplasm. The catalysed reaction is L-glutamate 5-semialdehyde + phosphate + NADP(+) = L-glutamyl 5-phosphate + NADPH + H(+). It participates in amino-acid biosynthesis; L-proline biosynthesis; L-glutamate 5-semialdehyde from L-glutamate: step 2/2. Catalyzes the NADPH-dependent reduction of L-glutamate 5-phosphate into L-glutamate 5-semialdehyde and phosphate. The product spontaneously undergoes cyclization to form 1-pyrroline-5-carboxylate. The sequence is that of Gamma-glutamyl phosphate reductase from Acidiphilium cryptum (strain JF-5).